Here is a 397-residue protein sequence, read N- to C-terminus: 1-deoxy-D-xylulose 5-phosphate reductoisomerase (397 aa).

The NADPH site is built by T10, G11, S12, I13, Q38, and N123. Residue K124 coordinates 1-deoxy-D-xylulose 5-phosphate. NADPH is bound at residue E125. Residue D149 participates in Mn(2+) binding. Residues S150, E151, S185, and H208 each coordinate 1-deoxy-D-xylulose 5-phosphate. E151 contributes to the Mn(2+) binding site. G214 serves as a coordination point for NADPH. Positions 221, 226, 227, and 230 each coordinate 1-deoxy-D-xylulose 5-phosphate. E230 lines the Mn(2+) pocket.

It belongs to the DXR family. Mg(2+) is required as a cofactor. Requires Mn(2+) as cofactor.

The catalysed reaction is 2-C-methyl-D-erythritol 4-phosphate + NADP(+) = 1-deoxy-D-xylulose 5-phosphate + NADPH + H(+). It participates in isoprenoid biosynthesis; isopentenyl diphosphate biosynthesis via DXP pathway; isopentenyl diphosphate from 1-deoxy-D-xylulose 5-phosphate: step 1/6. In terms of biological role, catalyzes the NADPH-dependent rearrangement and reduction of 1-deoxy-D-xylulose-5-phosphate (DXP) to 2-C-methyl-D-erythritol 4-phosphate (MEP). The chain is 1-deoxy-D-xylulose 5-phosphate reductoisomerase from Idiomarina loihiensis (strain ATCC BAA-735 / DSM 15497 / L2-TR).